The chain runs to 130 residues: C-type natriuretic peptide 2 (130 aa).

Residues 1 to 22 (MAASSSSFVPLVLLFLAIPVEP) form the signal peptide. The propeptide occupies 23 to 103 (RPSMTRDEAQ…LQQQSKTTRR (81 aa)). The disordered stretch occupies residues 57–77 (ELLPRRPGPPRSFGASPGALR). Cys-114 and Cys-130 are joined by a disulfide.

The protein belongs to the natriuretic peptide family.

It is found in the secreted. In terms of biological role, exhibits natriuretic and vasodepressant activity. Has cGMP-stimulating activity. May help to regulate body fluid homeostasis in a variety of aquatic environments. The chain is C-type natriuretic peptide 2 from Takifugu rubripes (Japanese pufferfish).